The following is a 203-amino-acid chain: Thymidylate kinase (203 aa).

ATP is bound at residue 7 to 14; sequence GGEGAGKT.

The protein belongs to the thymidylate kinase family.

The enzyme catalyses dTMP + ATP = dTDP + ADP. Its function is as follows. Phosphorylation of dTMP to form dTDP in both de novo and salvage pathways of dTTP synthesis. The polypeptide is Thymidylate kinase (tmk) (Chlamydia muridarum (strain MoPn / Nigg)).